The primary structure comprises 308 residues: N-acetylmuramic acid 6-phosphate etherase (308 aa).

Positions 62–225 (ITDAFKVGGR…TTASMIRLGK (164 aa)) constitute an SIS domain. Glu90 functions as the Proton donor in the catalytic mechanism. Glu121 is a catalytic residue.

Belongs to the GCKR-like family. MurNAc-6-P etherase subfamily. In terms of assembly, homodimer.

The enzyme catalyses N-acetyl-D-muramate 6-phosphate + H2O = N-acetyl-D-glucosamine 6-phosphate + (R)-lactate. It functions in the pathway amino-sugar metabolism; 1,6-anhydro-N-acetylmuramate degradation. The protein operates within amino-sugar metabolism; N-acetylmuramate degradation. Its pathway is cell wall biogenesis; peptidoglycan recycling. In terms of biological role, specifically catalyzes the cleavage of the D-lactyl ether substituent of MurNAc 6-phosphate, producing GlcNAc 6-phosphate and D-lactate. Together with AnmK, is also required for the utilization of anhydro-N-acetylmuramic acid (anhMurNAc) either imported from the medium or derived from its own cell wall murein, and thus plays a role in cell wall recycling. The protein is N-acetylmuramic acid 6-phosphate etherase of Vibrio campbellii (strain ATCC BAA-1116).